We begin with the raw amino-acid sequence, 187 residues long: Elongation factor P (187 aa).

It belongs to the elongation factor P family.

It is found in the cytoplasm. It functions in the pathway protein biosynthesis; polypeptide chain elongation. Functionally, involved in peptide bond synthesis. Stimulates efficient translation and peptide-bond synthesis on native or reconstituted 70S ribosomes in vitro. Probably functions indirectly by altering the affinity of the ribosome for aminoacyl-tRNA, thus increasing their reactivity as acceptors for peptidyl transferase. The polypeptide is Elongation factor P (Mycoplasmopsis pulmonis (strain UAB CTIP) (Mycoplasma pulmonis)).